A 346-amino-acid polypeptide reads, in one-letter code: Probable dolichyl-diphosphooligosaccharide--protein glycosyltransferase subunit 3B (346 aa).

The N-terminal stretch at 1 to 22 (MALKSKLVSLLFLIATLSSTFA) is a signal peptide. Over 23–189 (ASFSDSDSDS…KVGPIQRPPL (167 aa)) the chain is Lumenal. N108 is a glycosylation site (N-linked (GlcNAc...) asparagine). A helical transmembrane segment spans residues 190 to 210 (LSKPQIGIIVALIVIATPFII). Topologically, residues 211–225 (KRVLKGETILHDTRL) are cytoplasmic. Residues 226 to 246 (WLSGAIFIYFFSVAGTMHNII) form a helical membrane-spanning segment. At 247–277 (RKMPMFLQDRNDPNKLVFFYQGSGMQLGAEG) the chain is on the lumenal side. Residues 278 to 298 (FAVGFLYTVVGLLLAFVTNVL) form a helical membrane-spanning segment. Over 299–308 (VRVKNITAQR) the chain is Cytoplasmic. A helical transmembrane segment spans residues 309–329 (LIMLLALFISFWAVKKVVYLD). The Lumenal segment spans residues 330 to 346 (NWKTGYGIHPYWPSSWR).

The protein belongs to the OST3/OST6 family. In terms of assembly, component of the oligosaccharyltransferase (OST) complex.

The protein resides in the endoplasmic reticulum membrane. Functionally, subunit of the oligosaccharyl transferase (OST) complex that catalyzes the initial transfer of a defined glycan (Glc(3)Man(9)GlcNAc(2) in eukaryotes) from the lipid carrier dolichol-pyrophosphate to an asparagine residue within an Asn-X-Ser/Thr consensus motif in nascent polypeptide chains, the first step in protein N-glycosylation. N-glycosylation occurs cotranslationally and the complex associates with the Sec61 complex at the channel-forming translocon complex that mediates protein translocation across the endoplasmic reticulum (ER). All subunits are required for a maximal enzyme activity. In Arabidopsis thaliana (Mouse-ear cress), this protein is Probable dolichyl-diphosphooligosaccharide--protein glycosyltransferase subunit 3B (OST3B).